The sequence spans 228 residues: Orotidine 5'-phosphate decarboxylase (228 aa).

Residues Asp-20, Lys-42, 70–79, Ser-127, 180–190, Gly-202, and Arg-203 each bind substrate; these read DFKVADIPET and PGVGAQGGDPG. Lys-72 (proton donor) is an active-site residue.

This sequence belongs to the OMP decarboxylase family. Type 1 subfamily. In terms of assembly, homodimer.

It carries out the reaction orotidine 5'-phosphate + H(+) = UMP + CO2. It participates in pyrimidine metabolism; UMP biosynthesis via de novo pathway; UMP from orotate: step 2/2. Its function is as follows. Catalyzes the decarboxylation of orotidine 5'-monophosphate (OMP) to uridine 5'-monophosphate (UMP). This chain is Orotidine 5'-phosphate decarboxylase (pyrF), found in Methanothermobacter thermautotrophicus (strain ATCC 29096 / DSM 1053 / JCM 10044 / NBRC 100330 / Delta H) (Methanobacterium thermoautotrophicum).